We begin with the raw amino-acid sequence, 186 residues long: Spermidine N(1)-acetyltransferase (186 aa).

The N-acetyltransferase domain maps to 7–167; sequence VKLRPLERED…NAIRMCIFQH (161 aa). Residues methionine 30, glutamate 35, glutamate 43, and 51-54 contribute to the spermine site; that span reads HIHD. Glutamate 35 is a binding site for Mg(2+). Spermidine-binding residues include glutamate 35 and glutamate 43. Mg(2+) is bound at residue glutamate 76. Spermine is bound at residue 85 to 87; the sequence is EFQ. Acetyl-CoA is bound by residues 88-90, 95-101, and 128-137; these read III, QGKGLAT, and NEKAIHIYRK. Tyrosine 135 functions as the Proton donor in the catalytic mechanism.

Belongs to the acetyltransferase family. In terms of assembly, homododecamer.

It localises to the cytoplasm. It catalyses the reaction an alkane-alpha,omega-diamine + acetyl-CoA = an N-acetylalkane-alpha,omega-diamine + CoA + H(+). The catalysed reaction is spermidine + acetyl-CoA = N(1)-acetylspermidine + CoA + H(+). It carries out the reaction spermidine + acetyl-CoA = N(8)-acetylspermidine + CoA + H(+). The enzyme catalyses spermine + acetyl-CoA = N(1)-acetylspermine + CoA + H(+). Its pathway is amine and polyamine degradation; spermidine degradation. It participates in amine and polyamine degradation; spermine degradation. Involved in the protection against polyamine toxicity by regulating their concentration. Catalyzes the transfer of an acetyl group from acetyl coenzyme A (AcCoA) to the primary amino groups of spermidine to yield N(1)- and N(8)-acetylspermidine. It can also use spermine. This chain is Spermidine N(1)-acetyltransferase (speG), found in Escherichia coli O157:H7.